The primary structure comprises 137 residues: Transcription antitermination protein NusB (137 aa).

It belongs to the NusB family.

Involved in transcription antitermination. Required for transcription of ribosomal RNA (rRNA) genes. Binds specifically to the boxA antiterminator sequence of the ribosomal RNA (rrn) operons. This chain is Transcription antitermination protein NusB, found in Borreliella afzelii (strain PKo) (Borrelia afzelii).